Here is a 142-residue protein sequence, read N- to C-terminus: Large ribosomal subunit protein uL11 (142 aa).

This sequence belongs to the universal ribosomal protein uL11 family. In terms of assembly, part of the ribosomal stalk of the 50S ribosomal subunit. Interacts with L10 and the large rRNA to form the base of the stalk. L10 forms an elongated spine to which L12 dimers bind in a sequential fashion forming a multimeric L10(L12)X complex. One or more lysine residues are methylated.

Functionally, forms part of the ribosomal stalk which helps the ribosome interact with GTP-bound translation factors. This chain is Large ribosomal subunit protein uL11, found in Liberibacter asiaticus (Citrus greening disease).